Consider the following 414-residue polypeptide: Heterogeneous nuclear ribonucleoprotein F (414 aa).

Position 1 is an N-acetylmethionine (methionine 1). Methionine 2 is subject to N-acetylmethionine; in Heterogeneous nuclear ribonucleoprotein F, N-terminally processed. The RRM 1 domain maps to 11-90; that stretch reads FVVKLRGLPW…RYIEVFKSHR (80 aa). Lysine 72 is covalently cross-linked (Glycyl lysine isopeptide (Lys-Gly) (interchain with G-Cter in SUMO)). The segment at 81-86 is interaction with RNA; it reads RYIEVF. A Glycyl lysine isopeptide (Lys-Gly) (interchain with G-Cter in SUMO2) cross-link involves residue lysine 87. 2 positions are modified to phosphoserine: serine 104 and serine 161. The 78-residue stretch at 111-188 folds into the RRM 2 domain; the sequence is GFVRLRGLPF…RYIEVFKSSQ (78 aa). Lysine 167 is covalently cross-linked (Glycyl lysine isopeptide (Lys-Gly) (interchain with G-Cter in SUMO2)). Residues 179–184 form an interaction with RNA region; that stretch reads RYIEVF. Lysine 185 is covalently cross-linked (Glycyl lysine isopeptide (Lys-Gly) (interchain with G-Cter in SUMO2)). Serine 187, serine 193, and serine 195 each carry phosphoserine. N6-acetyllysine; alternate is present on lysine 200. A Glycyl lysine isopeptide (Lys-Gly) (interchain with G-Cter in SUMO2); alternate cross-link involves residue lysine 200. Threonine 215 bears the Phosphothreonine mark. The residue at position 224 (lysine 224) is an N6-acetyllysine; alternate. Lysine 224 is covalently cross-linked (Glycyl lysine isopeptide (Lys-Gly) (interchain with G-Cter in SUMO2); alternate). At serine 265 the chain carries Phosphoserine. In terms of domain architecture, RRM 3 spans 289–366; the sequence is HCVHMRGLPY…IELFLNSTTG (78 aa). The tract at residues 355 to 360 is interaction with RNA; sequence RYIELF.

As to quaternary structure, identified in the spliceosome C complex. Interacts with AGO1, AGO2, TBP and TXNL4/DIM1. Post-translationally, sumoylated.

It localises to the nucleus. The protein resides in the nucleoplasm. Component of the heterogeneous nuclear ribonucleoprotein (hnRNP) complexes which provide the substrate for the processing events that pre-mRNAs undergo before becoming functional, translatable mRNAs in the cytoplasm. Plays a role in the regulation of alternative splicing events. Binds G-rich sequences in pre-mRNAs and keeps target RNA in an unfolded state. The sequence is that of Heterogeneous nuclear ribonucleoprotein F (HNRNPF) from Bos taurus (Bovine).